The following is a 227-amino-acid chain: Small ribosomal subunit protein uS5 (227 aa).

Residues 1 to 22 (MSKRSNRSNNKNNTNKFNIENW) are disordered. Residues 7–18 (RSNNKNNTNKFN) show a composition bias toward low complexity. The S5 DRBM domain maps to 63 to 126 (LEEEVMDVNL…DAAKYNLIKV (64 aa)).

The protein belongs to the universal ribosomal protein uS5 family. Part of the 30S ribosomal subunit. Contacts protein S4.

With S4 and S12 plays an important role in translational accuracy. The sequence is that of Small ribosomal subunit protein uS5 from Methanosphaera stadtmanae (strain ATCC 43021 / DSM 3091 / JCM 11832 / MCB-3).